The primary structure comprises 329 residues: 3-isopropylmalate dehydrogenase (329 aa).

Substrate is bound by residues R83, R93, R114, and D200. D200, D224, and D228 together coordinate Mg(2+). Residue 257–269 participates in NAD(+) binding; that stretch reads GSAPQIAGKNIAN.

The protein belongs to the isocitrate and isopropylmalate dehydrogenases family. Homotetramer. Mg(2+) is required as a cofactor. Requires Mn(2+) as cofactor.

The protein resides in the cytoplasm. It catalyses the reaction (2R,3S)-3-isopropylmalate + NAD(+) = 4-methyl-2-oxopentanoate + CO2 + NADH. The protein operates within amino-acid biosynthesis; L-leucine biosynthesis; L-leucine from 3-methyl-2-oxobutanoate: step 3/4. In terms of biological role, catalyzes the oxidation of 3-carboxy-2-hydroxy-4-methylpentanoate (3-isopropylmalate) to 3-carboxy-4-methyl-2-oxopentanoate. The product decarboxylates to 4-methyl-2 oxopentanoate. The polypeptide is 3-isopropylmalate dehydrogenase (leuB) (Methanothermobacter thermautotrophicus (strain ATCC 29096 / DSM 1053 / JCM 10044 / NBRC 100330 / Delta H) (Methanobacterium thermoautotrophicum)).